A 426-amino-acid polypeptide reads, in one-letter code: Dihydroorotase (426 aa).

Residues His58 and His60 each contribute to the Zn(2+) site. Residues 60–62 (HLR) and Asn92 each bind substrate. Asp150, His177, and His230 together coordinate Zn(2+). Asn276 is a substrate binding site. Residue Asp303 coordinates Zn(2+). Asp303 is an active-site residue. Residues His307 and 321-322 (FG) each bind substrate.

This sequence belongs to the metallo-dependent hydrolases superfamily. DHOase family. Class I DHOase subfamily. Zn(2+) is required as a cofactor.

It catalyses the reaction (S)-dihydroorotate + H2O = N-carbamoyl-L-aspartate + H(+). It functions in the pathway pyrimidine metabolism; UMP biosynthesis via de novo pathway; (S)-dihydroorotate from bicarbonate: step 3/3. Its function is as follows. Catalyzes the reversible cyclization of carbamoyl aspartate to dihydroorotate. The chain is Dihydroorotase from Listeria monocytogenes serovar 1/2a (strain ATCC BAA-679 / EGD-e).